Here is a 179-residue protein sequence, read N- to C-terminus: PP2C-like domain-containing protein R307 (179 aa).

Residues 1-176 (MNESKRENIQ…DNVSVIIIFF (176 aa)) form the PPM-type phosphatase domain.

It localises to the virion. The protein is PP2C-like domain-containing protein R307 of Acanthamoeba polyphaga mimivirus (APMV).